The chain runs to 499 residues: Glycerol kinase (499 aa).

ADP is bound at residue Thr-13. ATP is bound by residues Thr-13, Thr-14, and Ser-15. A sn-glycerol 3-phosphate-binding site is contributed by Thr-13. Position 17 (Arg-17) interacts with ADP. The sn-glycerol 3-phosphate site is built by Arg-83, Glu-84, Tyr-135, and Asp-245. Glycerol contacts are provided by Arg-83, Glu-84, Tyr-135, Asp-245, and Gln-246. ADP-binding residues include Thr-267 and Gly-310. Thr-267, Gly-310, Gln-314, and Gly-411 together coordinate ATP. The ADP site is built by Gly-411 and Asn-415.

It belongs to the FGGY kinase family.

It carries out the reaction glycerol + ATP = sn-glycerol 3-phosphate + ADP + H(+). Its pathway is polyol metabolism; glycerol degradation via glycerol kinase pathway; sn-glycerol 3-phosphate from glycerol: step 1/1. Inhibited by fructose 1,6-bisphosphate (FBP). Key enzyme in the regulation of glycerol uptake and metabolism. Catalyzes the phosphorylation of glycerol to yield sn-glycerol 3-phosphate. The protein is Glycerol kinase of Xanthomonas campestris pv. campestris (strain 8004).